We begin with the raw amino-acid sequence, 115 residues long: T cell receptor delta variable 2 (115 aa).

The first 19 residues, 1-19 (MQRISSLIHLSLFWAGVMS), serve as a signal peptide directing secretion. The Ig-like domain occupies 25–115 (PEHQTVPVSI…EGSYYCACDT (91 aa)). Residues Cys-42 and Cys-111 are joined by a disulfide bond.

In terms of assembly, gamma-delta TR is a heterodimer composed of a gamma and delta chain; disulfide-linked. The gamma-delta TR is associated with the transmembrane signaling CD3 coreceptor proteins following the stoichiometry: a single gamma-delta TR heterodimer associates with one CD3D-CD3E heterodimer, one CD3G-CD3E heterodimer and one CD247 homodimer forming a stable octameric structure. Upon activation, gamma-delta TR complex associates with FCER1G to initiate intracellular signaling.

Its subcellular location is the cell membrane. Functionally, v region of the variable domain of T cell receptor (TR) delta chain that participates in the antigen recognition. Gamma-delta TRs recognize a variety of self and foreign non-peptide antigens frequently expressed at the epithelial boundaries between the host and external environment, including endogenous lipids presented by MH-like protein CD1D and phosphoantigens presented by butyrophilin-like molecule BTN3A1. Upon antigen recognition induces rapid, innate-like immune responses involved in pathogen clearance and tissue repair. Binding of gamma-delta TR complex to antigen triggers phosphorylation of immunoreceptor tyrosine-based activation motifs (ITAMs) in the CD3 chains by the LCK and FYN kinases, allowing the recruitment, phosphorylation, and activation of ZAP70 that facilitates phosphorylation of the scaffolding proteins LCP2 and LAT. This lead to the formation of a supramolecular signalosome that recruits the phospholipase PLCG1, resulting in calcium mobilization and ERK activation, ultimately leading to T cell expansion and differentiation into effector cells. Gamma-delta TRs are produced through somatic rearrangement of a limited repertoire of variable (V), diversity (D), and joining (J) genes. The potential diversity of gamma-delta TRs is conferred by the unique ability to rearrange (D) genes in tandem and to utilize all three reading frames. The combinatorial diversity is considerably increased by the sequence exonuclease trimming and random nucleotide (N) region additions which occur during the V-(D)-J rearrangements. The protein is T cell receptor delta variable 2 of Homo sapiens (Human).